An 853-amino-acid polypeptide reads, in one-letter code: DNA mismatch repair protein MutS (853 aa).

An ATP-binding site is contributed by 614–621; the sequence is GPNMGGKS.

It belongs to the DNA mismatch repair MutS family.

Its function is as follows. This protein is involved in the repair of mismatches in DNA. It is possible that it carries out the mismatch recognition step. This protein has a weak ATPase activity. This chain is DNA mismatch repair protein MutS, found in Escherichia coli (strain SMS-3-5 / SECEC).